A 119-amino-acid polypeptide reads, in one-letter code: Chorion class B protein M2807 (119 aa).

Residues 1-11 (GGLGGGCGRGF) are left arm. The central domain stretch occupies residues 12 to 80 (SGGGLPVATA…GNGAVGITRE (69 aa)). The segment at 81 to 119 (GGLGYGAGYGDGYGLGYGGYGGGYGLGYGGYGGCGCGCG) is right arm (Gly-rich tandem repeats).

It belongs to the chorion protein family.

Functionally, this protein is one of many from the eggshell of the silk moth. This Bombyx mori (Silk moth) protein is Chorion class B protein M2807.